The sequence spans 677 residues: Beta-galactosidase (677 aa).

The N-terminal stretch at M1–G23 is a signal peptide. The propeptide occupies L24 to T28. An N-linked (GlcNAc...) asparagine glycan is attached at N26. Residues Y83, E129, and N187 each coordinate substrate. Residue E188 is the Proton donor of the active site. A disulfide bond links C195 and C230. Residue N247 is glycosylated (N-linked (GlcNAc...) asparagine). The Nucleophile role is filled by E268. Y333 serves as a coordination point for substrate. Residues N464, N498, N545, and N555 are each glycosylated (N-linked (GlcNAc...) asparagine). A disulfide bridge connects residues C626 and C634. Positions S654–V677 are disordered. A compositionally biased stretch (basic and acidic residues) spans K668 to V677.

This sequence belongs to the glycosyl hydrolase 35 family. In terms of assembly, homodimer. May form higher multimers.

Its subcellular location is the lysosome. The enzyme catalyses Hydrolysis of terminal non-reducing beta-D-galactose residues in beta-D-galactosides.. Cleaves beta-linked terminal galactosyl residues from gangliosides, glycoproteins, and glycosaminoglycans. The protein is Beta-galactosidase (GLB1) of Pongo abelii (Sumatran orangutan).